The chain runs to 889 residues: Alanine--tRNA ligase (889 aa).

Residues His569, His573, Cys671, and His675 each coordinate Zn(2+).

The protein belongs to the class-II aminoacyl-tRNA synthetase family. The cofactor is Zn(2+).

The protein localises to the cytoplasm. The enzyme catalyses tRNA(Ala) + L-alanine + ATP = L-alanyl-tRNA(Ala) + AMP + diphosphate. Functionally, catalyzes the attachment of alanine to tRNA(Ala) in a two-step reaction: alanine is first activated by ATP to form Ala-AMP and then transferred to the acceptor end of tRNA(Ala). Also edits incorrectly charged Ser-tRNA(Ala) and Gly-tRNA(Ala) via its editing domain. This is Alanine--tRNA ligase from Parasynechococcus marenigrum (strain WH8102).